The chain runs to 728 residues: Nucleolar GTP-binding protein 2 (728 aa).

Methionine 1 bears the N-acetylmethionine mark. The interval 1-33 (MVKPKYKGRSTINRSAASTNPDRVQGAGGQNMR) is disordered. Positions 10 to 22 (STINRSAASTNPD) are enriched in polar residues. Residues 207–368 (WGELYKVIDS…LIDCPGVVYP (162 aa)) enclose the CP-type G domain. GTP is bound by residues 317–324 (GYPNVGKS) and 361–365 (DCPGV). Disordered regions lie at residues 462 to 521 (PPNA…RNSE), 538 to 595 (VGPQ…DTKA), and 636 to 728 (YKEE…RQKQ). Over residues 480–489 (EVPTETTQNN) the composition is skewed to low complexity. Residues 498–520 (EVERSDSITEKEPEGDCSQDRNS) are compositionally biased toward basic and acidic residues. Serine 504 carries the post-translational modification Phosphoserine. Residues 553–586 (SDLEDLESSGEEEEQEQEQPGEDAEEERSPDTQE) are compositionally biased toward acidic residues. A compositionally biased stretch (basic residues) spans 718-728 (KHRRNKFRQKQ).

The protein belongs to the TRAFAC class YlqF/YawG GTPase family. NOG2 subfamily. Interacts with LYAR and RPL23A. Interacts with the nuclear importin-beta receptor and, at a lower extent, with importin-alpha.

It is found in the nucleus. The protein resides in the nucleolus. In terms of biological role, GTPase that associates with pre-60S ribosomal subunits in the nucleolus and is required for their nuclear export and maturation. May promote cell proliferation possibly by increasing p53/TP53 protein levels, and consequently those of its downstream product CDKN1A/p21, and decreasing RPL23A protein levels. This Mus musculus (Mouse) protein is Nucleolar GTP-binding protein 2 (Gnl2).